We begin with the raw amino-acid sequence, 323 residues long: Acetyl-coenzyme A carboxylase carboxyl transferase subunit alpha (323 aa).

Residues 39-293 (RLSKKSQQLT…RRALGDSLRQ (255 aa)) form the CoA carboxyltransferase C-terminal domain.

Belongs to the AccA family. As to quaternary structure, acetyl-CoA carboxylase is a heterohexamer composed of biotin carboxyl carrier protein (AccB), biotin carboxylase (AccC) and two subunits each of ACCase subunit alpha (AccA) and ACCase subunit beta (AccD).

Its subcellular location is the cytoplasm. The catalysed reaction is N(6)-carboxybiotinyl-L-lysyl-[protein] + acetyl-CoA = N(6)-biotinyl-L-lysyl-[protein] + malonyl-CoA. The protein operates within lipid metabolism; malonyl-CoA biosynthesis; malonyl-CoA from acetyl-CoA: step 1/1. Component of the acetyl coenzyme A carboxylase (ACC) complex. First, biotin carboxylase catalyzes the carboxylation of biotin on its carrier protein (BCCP) and then the CO(2) group is transferred by the carboxyltransferase to acetyl-CoA to form malonyl-CoA. In Burkholderia pseudomallei (strain 1106a), this protein is Acetyl-coenzyme A carboxylase carboxyl transferase subunit alpha.